A 444-amino-acid chain; its full sequence is Multidrug resistance protein MdtA (444 aa).

An N-terminal signal peptide occupies residues 1–20 (MKSQSKRTSRLFVFVGVVVA). The segment covering 37-52 (NNTSGAQQSARGQDTS) has biased composition (polar residues). Disordered stretches follow at residues 37–60 (NNTS…RNTP) and 398–444 (TPRS…AEKS). The span at 409-419 (ASAEKAAAEAE) shows a compositional bias: low complexity. The segment covering 435-444 (ARSTTAAEKS) has biased composition (polar residues).

The protein belongs to the membrane fusion protein (MFP) (TC 8.A.1) family. Part of a tripartite efflux system composed of MdtA, MdtB and MdtC.

Its subcellular location is the cell inner membrane. The polypeptide is Multidrug resistance protein MdtA (Yersinia pseudotuberculosis serotype O:3 (strain YPIII)).